The sequence spans 135 residues: Large ribosomal subunit protein eL32 (135 aa).

Lys-9 participates in a covalent cross-link: Glycyl lysine isopeptide (Lys-Gly) (interchain with G-Cter in SUMO2). The residue at position 50 (Lys-50) is an N6-succinyllysine. A Phosphoserine modification is found at Ser-62.

It belongs to the eukaryotic ribosomal protein eL32 family. As to quaternary structure, component of the large ribosomal subunit.

The protein localises to the cytoplasm. Functionally, component of the large ribosomal subunit. The ribosome is a large ribonucleoprotein complex responsible for the synthesis of proteins in the cell. This chain is Large ribosomal subunit protein eL32 (RPL32), found in Oryctolagus cuniculus (Rabbit).